A 232-amino-acid polypeptide reads, in one-letter code: Large ribosomal subunit protein uL1 (232 aa).

The protein belongs to the universal ribosomal protein uL1 family. As to quaternary structure, part of the 50S ribosomal subunit.

In terms of biological role, binds directly to 23S rRNA. The L1 stalk is quite mobile in the ribosome, and is involved in E site tRNA release. Its function is as follows. Protein L1 is also a translational repressor protein, it controls the translation of the L11 operon by binding to its mRNA. The sequence is that of Large ribosomal subunit protein uL1 from Sinorhizobium fredii (strain NBRC 101917 / NGR234).